Consider the following 440-residue polypeptide: GTPase Der (440 aa).

EngA-type G domains follow at residues A5–E167 and I178–S353. Residues G11–S18, D58–I62, N120–E123, G184–S191, D231–L235, and N296–D299 each bind GTP. Positions K354 to Q438 constitute a KH-like domain.

The protein belongs to the TRAFAC class TrmE-Era-EngA-EngB-Septin-like GTPase superfamily. EngA (Der) GTPase family. As to quaternary structure, associates with the 50S ribosomal subunit.

Its function is as follows. GTPase that plays an essential role in the late steps of ribosome biogenesis. The polypeptide is GTPase Der (Natranaerobius thermophilus (strain ATCC BAA-1301 / DSM 18059 / JW/NM-WN-LF)).